The following is a 164-amino-acid chain: Phosphopantetheine adenylyltransferase (164 aa).

T14 serves as a coordination point for substrate. ATP-binding positions include 14–15 (TF) and H22. Substrate contacts are provided by K46, M78, and R92. ATP contacts are provided by residues 93-95 (GLR), E103, and 128-134 (HAFISST).

Belongs to the bacterial CoaD family. As to quaternary structure, homohexamer. It depends on Mg(2+) as a cofactor.

The protein resides in the cytoplasm. The enzyme catalyses (R)-4'-phosphopantetheine + ATP + H(+) = 3'-dephospho-CoA + diphosphate. It participates in cofactor biosynthesis; coenzyme A biosynthesis; CoA from (R)-pantothenate: step 4/5. Functionally, reversibly transfers an adenylyl group from ATP to 4'-phosphopantetheine, yielding dephospho-CoA (dPCoA) and pyrophosphate. The protein is Phosphopantetheine adenylyltransferase of Vibrio vulnificus (strain CMCP6).